A 205-amino-acid chain; its full sequence is LIM domain-containing protein PLIM2b (205 aa).

LIM zinc-binding domains lie at 8-68 (DKCN…LFKE) and 102-162 (DKCA…LFME). The interval 177-205 (RTASGNTLPPEPTEDVAVEAKEENGVSES) is disordered. Basic and acidic residues predominate over residues 194-205 (VEAKEENGVSES).

As to quaternary structure, interacts with F-actin. As to expression, predominantly expressed in flowers and in pollen grains. Detected in vasculature and roots.

It localises to the cytoplasm. The protein localises to the cytoskeleton. Its function is as follows. Binds to actin filaments and promotes cross-linking into thick bundles. Has an actin-stabilizing activity. The actin regulatory activities are inhibited by pH &gt; 6.8 but are [Ca(2+)] independent. This is LIM domain-containing protein PLIM2b from Arabidopsis thaliana (Mouse-ear cress).